A 196-amino-acid polypeptide reads, in one-letter code: SAGA-associated factor 11 homolog (196 aa).

The disordered stretch occupies residues 1–22 (MSAANMPTTTGAQGSGNQVPTT). The SGF11-type zinc finger occupies 106-127 (CTCPNCDRLVAAARFAPHLEKC). The tract at residues 144–196 (TKEGASSAHLHSAGNAGGTDDEDDVDWSSDKRRKKSNQNSRNNGSKKNNGKTF) is disordered. Ser172 is subject to Phosphoserine. A compositionally biased stretch (low complexity) spans 180-196 (NQNSRNNGSKKNNGKTF).

This sequence belongs to the SGF11 family. As to quaternary structure, component of some SAGA transcription coactivator-HAT complexes, at least composed of Ada2b, not/nonstop, Pcaf/Gcn5, Sgf11 and Spt3. Within the SAGA complex, Sgf11, e(y)2, and not/nonstop form an additional subcomplex of SAGA called the DUB module (deubiquitination module). Interacts directly with not/nonstop. Interacts with the AMEX complex component xmas-2. Interacts with Cbp80; important for promoter recruitment of Sgf11 that is not associated with the DUB module.

It localises to the nucleus. It is found in the nucleoplasm. The protein localises to the cytoplasm. Its function is as follows. Component of the transcription regulatory histone acetylation (HAT) complex SAGA, a multiprotein complex that activates transcription by remodeling chromatin and mediating histone acetylation and deubiquitination. Within the SAGA complex, participates in a subcomplex that specifically deubiquitinates histone H2B. The SAGA complex is recruited to specific gene promoters by activators, where it is required for transcription. Required for nuclear receptor-mediated transactivation. Binds independently on SAGA to promoters in an RNA-dependent manner. Binds to mRNA and is essential for total mRNA export from the nucleus. Required to counteract heterochromatin silencing. Controls the development of neuronal connectivity in visual system by being required for accurate axon targeting in the optic lobe. Required for expression of ecdysone-induced genes such as br/broad. The sequence is that of SAGA-associated factor 11 homolog from Drosophila yakuba (Fruit fly).